The sequence spans 730 residues: Elongation factor 2 (730 aa).

The tr-type G domain occupies 19–260 (VMIRNIAIIA…MVIRFLPSPI (242 aa)). Residues 28 to 35 (AHIDHGKT), 94 to 98 (DTPGH), and 148 to 151 (NKVD) each bind GTP. At H596 the chain carries Diphthamide.

This sequence belongs to the TRAFAC class translation factor GTPase superfamily. Classic translation factor GTPase family. EF-G/EF-2 subfamily.

Its subcellular location is the cytoplasm. In terms of biological role, catalyzes the GTP-dependent ribosomal translocation step during translation elongation. During this step, the ribosome changes from the pre-translocational (PRE) to the post-translocational (POST) state as the newly formed A-site-bound peptidyl-tRNA and P-site-bound deacylated tRNA move to the P and E sites, respectively. Catalyzes the coordinated movement of the two tRNA molecules, the mRNA and conformational changes in the ribosome. The sequence is that of Elongation factor 2 (fusA) from Methanococcoides methylutens.